We begin with the raw amino-acid sequence, 314 residues long: Taste receptor type 2 member 42 (314 aa).

The Extracellular segment spans residues 1 to 7; that stretch reads MATELDK. Residues 8-28 traverse the membrane as a helical segment; it reads IFLTLAIVEFIIGMLGNVFIG. Residues 29–50 are Cytoplasmic-facing; that stretch reads LANCSEGIKNQKVFSVDFILTC. A helical transmembrane segment spans residues 51 to 71; sequence LAISTIGHLLVILFDSHVAGL. Over 72-101 the chain is Extracellular; the sequence is APHLYATDRVVRPVTVLWHMTNHLTTWLAT. Residues 102 to 122 traverse the membrane as a helical segment; it reads CLSIFYFFKIAHFPHSLFLWL. Residues 123–127 are Cytoplasmic-facing; the sequence is RWRMN. Residues 128–148 form a helical membrane-spanning segment; it reads RVIAILLTLSLFLLIFDCLVL. The Extracellular portion of the chain corresponds to 149-187; that stretch reads EMFIDISLNIIDKSNLTLYLDESKTPYDKLFLLKTLLSL. Residue Asn-163 is glycosylated (N-linked (GlcNAc...) asparagine). A helical membrane pass occupies residues 188 to 208; it reads NSFIPFSLCLTSLLFLFLSLV. Topologically, residues 209-238 are cytoplasmic; sequence RHTRNLKLSSLGSRDSSTEAHRRAMKMVMS. A helical transmembrane segment spans residues 239–259; that stretch reads FLFLFIVHFFSLQVANWTFCI. The Extracellular segment spans residues 260–265; it reads LGNNKY. Residues 266 to 286 form a helical membrane-spanning segment; that stretch reads TQFVMLALHAFPSCHSFILIL. The Cytoplasmic portion of the chain corresponds to 287–314; that stretch reads GNSKLRQTAVRLLWHLRNYTKRPNPLPL.

The protein belongs to the G-protein coupled receptor T2R family.

It is found in the membrane. Its function is as follows. Receptor that may play a role in the perception of bitterness and is gustducin-linked. May play a role in sensing the chemical composition of the gastrointestinal content. The activity of this receptor may stimulate alpha gustducin, mediate PLC-beta-2 activation and lead to the gating of TRPM5. This chain is Taste receptor type 2 member 42 (TAS2R42), found in Papio hamadryas (Hamadryas baboon).